A 120-amino-acid chain; its full sequence is Sirohydrochlorin cobaltochelatase (120 aa).

Residue His9 is the Proton acceptor of the active site. Residue His9 coordinates Co(2+). Substrate is bound by residues Gln43 and 68–73; that span reads FAAGTH. A Co(2+)-binding site is contributed by His73.

The protein belongs to the CbiX family. CbiXS subfamily. Homotetramer; dimer of dimers.

The catalysed reaction is Co-sirohydrochlorin + 2 H(+) = sirohydrochlorin + Co(2+). The protein operates within cofactor biosynthesis; adenosylcobalamin biosynthesis; cob(II)yrinate a,c-diamide from sirohydrochlorin (anaerobic route): step 1/10. Catalyzes the insertion of Co(2+) into sirohydrochlorin as part of the anaerobic pathway to cobalamin biosynthesis. The polypeptide is Sirohydrochlorin cobaltochelatase (Sulfurisphaera tokodaii (strain DSM 16993 / JCM 10545 / NBRC 100140 / 7) (Sulfolobus tokodaii)).